The primary structure comprises 466 residues: Clusterin-like protein 1 (466 aa).

The first 20 residues, 1-20 (MKPPLLVFIVCLLWLKDSHC), serve as a signal peptide directing secretion. The stretch at 57–111 (KQMKIMMERKEKEHTNLMSTLKKCREEKQEALKLLNEVQEHLEEEERLCRESLAD) forms a coiled coil. 5 disulfides stabilise this stretch: Cys105-Cys333, Cys116-Cys325, Cys119-Cys322, Cys124-Cys315, and Cys131-Cys305. Asn196, Asn257, Asn311, Asn351, Asn412, and Asn431 each carry an N-linked (GlcNAc...) asparagine glycan.

Belongs to the clusterin family.

The protein localises to the secreted. The polypeptide is Clusterin-like protein 1 (CLUL1) (Homo sapiens (Human)).